Reading from the N-terminus, the 493-residue chain is Cytochrome P450 710A4 (493 aa).

A helical membrane pass occupies residues Val5–Leu25. A heme-binding site is contributed by Cys435.

The protein belongs to the cytochrome P450 family. It depends on heme as a cofactor. In terms of tissue distribution, very weak expression in roots and root hairs. Not detected in the root tips.

The protein localises to the membrane. It carries out the reaction 5-dehydroepisterol + NADPH + O2 + H(+) = ergosta-5,7,22,24(28)-tetraen-3beta-ol + NADP(+) + 2 H2O. It functions in the pathway steroid biosynthesis; sterol biosynthesis. Functionally, required to form the C-22 double bond in the sterol side chain. Possesses C-22 desaturase activity toward beta-sitosterol and produces stigmasterol. The protein is Cytochrome P450 710A4 of Arabidopsis thaliana (Mouse-ear cress).